A 171-amino-acid chain; its full sequence is MISSLFFATKGFGLNLNLFETNVINLAVVIFGLYKFLPNFLGGILERRRSAILADLKDAEDRLTEANTALAKAKNELASAEQKAEKIRSDCKVRAEAIRLESEKKTVEEMARVKQGAAADLNAEASRVSTQLRREAAKLAIEKALVSLPNKLDEKAQLNFISQSIKNMGKD.

A helical transmembrane segment spans residues 12–34 (FGLNLNLFETNVINLAVVIFGLY).

It belongs to the ATPase B chain family. In terms of assembly, F-type ATPases have 2 components, F(1) - the catalytic core - and F(0) - the membrane proton channel. F(1) has five subunits: alpha(3), beta(3), gamma(1), delta(1), epsilon(1). F(0) has four main subunits: a(1), b(1), b'(1) and c(10-14). The alpha and beta chains form an alternating ring which encloses part of the gamma chain. F(1) is attached to F(0) by a central stalk formed by the gamma and epsilon chains, while a peripheral stalk is formed by the delta, b and b' chains.

It localises to the cellular thylakoid membrane. Functionally, f(1)F(0) ATP synthase produces ATP from ADP in the presence of a proton or sodium gradient. F-type ATPases consist of two structural domains, F(1) containing the extramembraneous catalytic core and F(0) containing the membrane proton channel, linked together by a central stalk and a peripheral stalk. During catalysis, ATP synthesis in the catalytic domain of F(1) is coupled via a rotary mechanism of the central stalk subunits to proton translocation. Its function is as follows. Component of the F(0) channel, it forms part of the peripheral stalk, linking F(1) to F(0). This Prochlorococcus marinus (strain MIT 9211) protein is ATP synthase subunit b.